A 105-amino-acid chain; its full sequence is Large ribosomal subunit protein uL24 (105 aa).

It belongs to the universal ribosomal protein uL24 family. As to quaternary structure, part of the 50S ribosomal subunit.

Its function is as follows. One of two assembly initiator proteins, it binds directly to the 5'-end of the 23S rRNA, where it nucleates assembly of the 50S subunit. In terms of biological role, one of the proteins that surrounds the polypeptide exit tunnel on the outside of the subunit. The chain is Large ribosomal subunit protein uL24 from Methylobacterium sp. (strain 4-46).